The primary structure comprises 378 residues: Dihydroorotate dehydrogenase (quinone) (378 aa).

Residues 79–83 and T103 contribute to the FMN site; that span reads PGYDK. A substrate-binding site is contributed by K83. A substrate-binding site is contributed by 128 to 132; that stretch reads NRMGF. Residues N160 and N193 each contribute to the FMN site. N193 is a substrate binding site. Residue S196 is the Nucleophile of the active site. Residue N198 coordinates substrate. FMN contacts are provided by K231 and T259. 260-261 is a binding site for substrate; it reads NT. FMN contacts are provided by residues G289, G318, and 339 to 340; that span reads YT.

The protein belongs to the dihydroorotate dehydrogenase family. Type 2 subfamily. In terms of assembly, monomer. FMN is required as a cofactor.

It is found in the cell membrane. The enzyme catalyses (S)-dihydroorotate + a quinone = orotate + a quinol. It participates in pyrimidine metabolism; UMP biosynthesis via de novo pathway; orotate from (S)-dihydroorotate (quinone route): step 1/1. Functionally, catalyzes the conversion of dihydroorotate to orotate with quinone as electron acceptor. This chain is Dihydroorotate dehydrogenase (quinone), found in Trichodesmium erythraeum (strain IMS101).